Here is a 189-residue protein sequence, read N- to C-terminus: METSAPRAGSQVVATTERHSAACRADPLRVSSRDKLTEMAASTQGNFDGNFESLDLAEFAKKQPWWRKLFGQESGPSAEKYSVATQLFIGGVTGWCTGFIFQNVGKLAATAVGGGFFLLQLANHTGYIKVDWQRVEKDMKKAKEQLKIRKSNQMPTEVRSKAEEVVSFVKKNVLVTGGFFGGFLLGMAS.

At 1-80 (METSAPRAGS…GQESGPSAEK (80 aa)) the chain is on the cytoplasmic side. 2 positions are modified to phosphoserine: serine 10 and serine 53. A helical membrane pass occupies residues 81–101 (YSVATQLFIGGVTGWCTGFIF). Residues 102–107 (QNVGKL) lie on the Mitochondrial intermembrane side of the membrane. Residues 108–128 (AATAVGGGFFLLQLANHTGYI) form a helical membrane-spanning segment. The Cytoplasmic segment spans residues 129–164 (KVDWQRVEKDMKKAKEQLKIRKSNQMPTEVRSKAEE). At serine 151 the chain carries Phosphoserine. A helical transmembrane segment spans residues 165-185 (VVSFVKKNVLVTGGFFGGFLL). Topologically, residues 186–189 (GMAS) are mitochondrial intermembrane.

The protein belongs to the FUN14 family.

It localises to the mitochondrion outer membrane. It is found in the nucleus. Its function is as follows. Binds directly and specifically 1,2-Diacyl-sn-glycero-3-phospho-(1'-myo-inositol-3',4',5'-bisphosphate) (PIP3) leading to the recruitment of PIP3 to mitochondria and may play a role in the regulation of the platelet activation via AKT/GSK3B/cGMP signaling pathways. May act as transcription factor that regulates SREBP1 (isoform SREBP-1C) expression in order to modulate triglyceride (TG) homeostasis in hepatocytes. This chain is FUN14 domain-containing protein 2, found in Macaca mulatta (Rhesus macaque).